We begin with the raw amino-acid sequence, 133 residues long: MKDNIELTIFTPEKNIKIGEIKEVITEGLDGDLAILPNHVNMITYLKPTITKYIDLNGNKNNIFTSSGVLKVEDNKVYIICDASEKPEDIDIKRAENARKRAEERLRNKKEIDVKRAELALFRSIARIKIKEL.

Belongs to the ATPase epsilon chain family. In terms of assembly, F-type ATPases have 2 components, CF(1) - the catalytic core - and CF(0) - the membrane proton channel. CF(1) has five subunits: alpha(3), beta(3), gamma(1), delta(1), epsilon(1). CF(0) has three main subunits: a, b and c.

The protein localises to the cell membrane. Functionally, produces ATP from ADP in the presence of a proton gradient across the membrane. This chain is ATP synthase epsilon chain, found in Clostridium botulinum (strain ATCC 19397 / Type A).